A 166-amino-acid chain; its full sequence is PTS system glucose-specific EIIA component (166 aa).

In terms of domain architecture, PTS EIIA type-1 spans 34–138; that stretch reads DPVFAQKMMG…SVISPIIITN (105 aa). Zn(2+) contacts are provided by histidine 71 and histidine 86. Catalysis depends on histidine 86, which acts as the Tele-phosphohistidine intermediate; for EIIA activity. Histidine 86 is modified (phosphohistidine; by HPr).

In terms of assembly, heterodimer with glycerol kinase (glpk). It depends on Zn(2+) as a cofactor.

The protein localises to the cytoplasm. Its function is as follows. The phosphoenolpyruvate-dependent sugar phosphotransferase system (sugar PTS), a major carbohydrate active transport system, catalyzes the phosphorylation of incoming sugar substrates concomitantly with their translocation across the cell membrane. The enzyme II complex composed of PtsG and Crr is involved in glucose transport. This Staphylococcus aureus (strain MRSA252) protein is PTS system glucose-specific EIIA component (crr).